The chain runs to 813 residues: Leucine--tRNA ligase (813 aa).

The 'HIGH' region signature appears at 40–51 (SYPSGSKLHAGH). The 'KMSKS' region motif lies at 572–576 (KMSKS). Residue Lys575 participates in ATP binding.

This sequence belongs to the class-I aminoacyl-tRNA synthetase family.

The protein localises to the cytoplasm. It catalyses the reaction tRNA(Leu) + L-leucine + ATP = L-leucyl-tRNA(Leu) + AMP + diphosphate. In Clostridium botulinum (strain ATCC 19397 / Type A), this protein is Leucine--tRNA ligase.